The chain runs to 209 residues: Glutathione S-transferase D1 (209 aa).

Positions 1–81 constitute a GST N-terminal domain; the sequence is MVDFYYLPGS…YLVEKYGKTD (81 aa). Residues Ser-10, 51-53, and 65-67 each bind glutathione; these read HTI and ESR. The GST C-terminal domain occupies 87-208; that stretch reads CPKKRAVINQ…AGCLEFKKYF (122 aa).

The protein belongs to the GST superfamily. Delta family. Homodimer.

The catalysed reaction is RX + glutathione = an S-substituted glutathione + a halide anion + H(+). The enzyme catalyses 1,1,1-trichloro-2,2-bis(4-chlorophenyl)ethane = 1,1-dichloro-2,2-bis(4-chlorophenyl)ethylene + chloride + H(+). Conjugation of reduced glutathione to a wide number of exogenous and endogenous hydrophobic electrophiles. Has DDT dehydrochlorinase activity. May be involved in detoxification. This is Glutathione S-transferase D1 from Drosophila melanogaster (Fruit fly).